Reading from the N-terminus, the 709-residue chain is Bud site selection protein 14 (709 aa).

The residue at position 2 (Ser-2) is an N-acetylserine. The segment at 61–258 (DIINNRPTSG…DYQPLSPPRE (198 aa)) is disordered. Polar residues-rich tracts occupy residues 62 to 74 (IINN…SKLT) and 89 to 107 (VTPT…NILS). Composition is skewed to basic and acidic residues over residues 111–123 (EKGH…RDDD) and 131–150 (VEKH…KENS). Tyr-159 carries the post-translational modification Phosphotyrosine. Ser-160 and Ser-162 each carry phosphoserine. Thr-177 bears the Phosphothreonine mark. 2 positions are modified to phosphoserine: Ser-212 and Ser-222. The span at 212 to 226 (SEDEDEEENYSDDDD) shows a compositional bias: acidic residues. One can recognise an SH3 domain in the interval 259 to 320 (LDPDKLYALY…PAEILETFPE (62 aa)). The interval 334-367 (SSQSVASSDSKDDSISSGNKNQSDAESIIPTPAL) is disordered. Phosphoserine is present on residues Ser-376, Ser-378, and Ser-401. Over residues 396 to 406 (DTSLDSNDDGG) the composition is skewed to acidic residues. Disordered stretches follow at residues 396–421 (DTSL…DNDK), 464–510 (NVKK…SDYD), 525–571 (ANGM…SSRA), and 600–680 (ASLG…PASK). Basic and acidic residues predominate over residues 470–504 (RQDNKNESEPKTSSSKDREDDYNANRYVGQEKSEP). At Ser-507 the chain carries Phosphoserine. The span at 531-552 (SDSQNSLSTIGEFSPSSSEWTN) shows a compositional bias: polar residues. Residues 553–569 (ESPSTPIVEESSSIPSS) are compositionally biased toward low complexity. Residues 600–614 (ASLGSSGGMANQTDA) show a composition bias toward polar residues. The span at 615-633 (EQPKEELEKHHSTPEEEKQ) shows a compositional bias: basic and acidic residues. 3 positions are modified to phosphoserine: Ser-655, Ser-658, and Ser-670. A compositionally biased stretch (low complexity) spans 655 to 671 (SSASINSSLSGSRALSN).

As to quaternary structure, interacts with GLC7.

Functionally, important for bud site selection. Seems to be a regulatory subunit of the BUD14-GLC7 type-I phosphatase complex. The BUD14-GLC7 complex is necessary to regulate microtubule dynamics at the cortex and may function as a specific activator of the dynein complex. The sequence is that of Bud site selection protein 14 (BUD14) from Saccharomyces cerevisiae (strain ATCC 204508 / S288c) (Baker's yeast).